The primary structure comprises 356 residues: tRNA N6-adenosine threonylcarbamoyltransferase (356 aa).

A divalent metal cation-binding residues include histidine 124, histidine 128, and tyrosine 145. Substrate-binding positions include 145–149 (YVSGG), aspartate 177, glycine 192, glutamate 196, and asparagine 287. Aspartate 315 is a binding site for a divalent metal cation.

Belongs to the KAE1 / TsaD family. In terms of assembly, component of the EKC/KEOPS complex composed of at least BUD32, CGI121, GON7, KAE1 and PCC1; the whole complex dimerizes. A divalent metal cation is required as a cofactor.

It localises to the cytoplasm. The protein localises to the nucleus. The enzyme catalyses L-threonylcarbamoyladenylate + adenosine(37) in tRNA = N(6)-L-threonylcarbamoyladenosine(37) in tRNA + AMP + H(+). Component of the EKC/KEOPS complex that is required for the formation of a threonylcarbamoyl group on adenosine at position 37 (t(6)A37) in tRNAs that read codons beginning with adenine. The complex is probably involved in the transfer of the threonylcarbamoyl moiety of threonylcarbamoyl-AMP (TC-AMP) to the N6 group of A37. KAE1 likely plays a direct catalytic role in this reaction, but requires other protein(s) of the complex to fulfill this activity. The EKC/KEOPS complex also promotes both telomere uncapping and telomere elongation. The complex is required for efficient recruitment of transcriptional coactivators. This Yarrowia lipolytica (strain CLIB 122 / E 150) (Yeast) protein is tRNA N6-adenosine threonylcarbamoyltransferase.